The chain runs to 170 residues: Large ribosomal subunit protein uL6m (170 aa).

This sequence belongs to the universal ribosomal protein uL6 family.

The protein localises to the mitochondrion. In Dictyostelium discoideum (Social amoeba), this protein is Large ribosomal subunit protein uL6m (mrpl6).